The following is a 743-amino-acid chain: MSSDSRPPQPDTSTQSNSESESPAISSPTPQDHAPMTNRDWWPNQIDVSMLHPHPSQASPLGADFDYPKEFAKLDVDALKADVMSVMTTSQDWWPADYGHYGGLFIRMSWHAAGTYRIQDGRGGGGQGMQRFAPLNSWPDNVSLDKARRLLWPVKQKYGSKISWADLIIFAGNCALDSMGFKTFGFGFGREDVWQPEEVMWGEEDVWLGTDKRYSGKRDLAQPYGATTMGLIYVNPEGPEGKPDPVAAAHDIRETFARMAMNDEETAALIVGGHSFGKTHGAGDADLVGPEPEAAPIEQQGFGWKSSFGSGKGKDAITSGLEVVWTPTPTQWGNGFLELLYGYEWELTKSPAGAWQFTAKDGAGAGTIPDPFGGPGRAPTMLVTDISMREDPIYRRITQRWLEHPEELTEAFAKAWYKLLHRDMGPVSRYLGPWVAEPQLWQDPVPDVDHELVDAKDVAALKSKVLASGLTVAQLVKTAWSAASSFRRTDKRGGANGGRLRLEPQKSWESNEPADLDQVLSVLEGIQQDFNSSAAGGKKISLADLIVLAGSAAVEKAAKDGGHEVSVPFAPGRTDASQENTDVESFAVLEPRADGFRNYVRVGEKAPLEHLLIERAYRLGVTAPEMTVLVGGLRALGANHGGSKHGVFTDNPGVLSNDFFVNLLDMGTEWKASEAAENVYEGCDRSSGQLKWTATANDLVFGSNSVLRALAEVYAQSDAKQKFAEDFAAAWAKVMNNDRFDLE.

Polar residues predominate over residues Met1 to Gln15. Residues Met1 to Asp40 are disordered. A compositionally biased stretch (low complexity) spans Ser16–Pro28. Positions Trp110–Tyr233 form a cross-link, tryptophyl-tyrosyl-methioninium (Trp-Tyr) (with M-259). The Proton acceptor role is filled by His111. The segment at residues Tyr233–Met259 is a cross-link (tryptophyl-tyrosyl-methioninium (Tyr-Met) (with W-110)). His274 is a heme b binding site. Residues Asp490–Asn511 form a disordered region.

Belongs to the peroxidase family. Peroxidase/catalase subfamily. Homodimer or homotetramer. Requires heme b as cofactor. Formation of the three residue Trp-Tyr-Met cross-link is important for the catalase, but not the peroxidase activity of the enzyme.

The enzyme catalyses H2O2 + AH2 = A + 2 H2O. It catalyses the reaction 2 H2O2 = O2 + 2 H2O. Bifunctional enzyme with both catalase and broad-spectrum peroxidase activity. This chain is Catalase-peroxidase, found in Mycobacterium marinum (strain ATCC BAA-535 / M).